Consider the following 600-residue polypeptide: ATP-dependent lipid A-core flippase (600 aa).

Helical transmembrane passes span 27–47, 83–103, 174–194, and 267–287; these read ISLF…QPML, LLII…NYFL, LLFM…LIAV, and PLLQ…VLYL. An ABC transmembrane type-1 domain is found at 31–322; the sequence is LISIVGFLIF…LSEVSSTIQK (292 aa). Residues 354–590 form the ABC transporter domain; sequence LDVRNLSFTY…NGYYARLNAM (237 aa). 388 to 395 lines the ATP pocket; that stretch reads GRSGSGKS.

Belongs to the ABC transporter superfamily. Lipid exporter (TC 3.A.1.106) family. Homodimer.

It localises to the cell inner membrane. The catalysed reaction is ATP + H2O + lipid A-core oligosaccharideSide 1 = ADP + phosphate + lipid A-core oligosaccharideSide 2.. Involved in lipopolysaccharide (LPS) biosynthesis. Translocates lipid A-core from the inner to the outer leaflet of the inner membrane. Transmembrane domains (TMD) form a pore in the inner membrane and the ATP-binding domain (NBD) is responsible for energy generation. The chain is ATP-dependent lipid A-core flippase from Pseudomonas fluorescens (strain Pf0-1).